A 409-amino-acid polypeptide reads, in one-letter code: 4-hydroxy-3-methylbut-2-en-1-yl diphosphate synthase (ferredoxin) (409 aa).

Residues 1–12 (MQTLDRPNAPTQ) are compositionally biased toward polar residues. The interval 1-22 (MQTLDRPNAPTQQPYPEPVYPR) is disordered. Cysteine 314, cysteine 317, cysteine 348, and glutamate 355 together coordinate [4Fe-4S] cluster.

This sequence belongs to the IspG family. The cofactor is [4Fe-4S] cluster.

It catalyses the reaction (2E)-4-hydroxy-3-methylbut-2-enyl diphosphate + 2 oxidized [2Fe-2S]-[ferredoxin] + H2O = 2-C-methyl-D-erythritol 2,4-cyclic diphosphate + 2 reduced [2Fe-2S]-[ferredoxin] + H(+). It participates in isoprenoid biosynthesis; isopentenyl diphosphate biosynthesis via DXP pathway; isopentenyl diphosphate from 1-deoxy-D-xylulose 5-phosphate: step 5/6. Functionally, converts 2C-methyl-D-erythritol 2,4-cyclodiphosphate (ME-2,4cPP) into 1-hydroxy-2-methyl-2-(E)-butenyl 4-diphosphate. In Synechococcus sp. (strain JA-2-3B'a(2-13)) (Cyanobacteria bacterium Yellowstone B-Prime), this protein is 4-hydroxy-3-methylbut-2-en-1-yl diphosphate synthase (ferredoxin).